The chain runs to 388 residues: Chorismate synthase (388 aa).

2 residues coordinate NADP(+): Arg39 and Arg45. FMN is bound by residues 132–134 (RSS), 251–252 (NA), Gly296, 311–315 (KPIPT), and Arg337.

The protein belongs to the chorismate synthase family. Homotetramer. FMNH2 serves as cofactor.

The enzyme catalyses 5-O-(1-carboxyvinyl)-3-phosphoshikimate = chorismate + phosphate. Its pathway is metabolic intermediate biosynthesis; chorismate biosynthesis; chorismate from D-erythrose 4-phosphate and phosphoenolpyruvate: step 7/7. Its function is as follows. Catalyzes the anti-1,4-elimination of the C-3 phosphate and the C-6 proR hydrogen from 5-enolpyruvylshikimate-3-phosphate (EPSP) to yield chorismate, which is the branch point compound that serves as the starting substrate for the three terminal pathways of aromatic amino acid biosynthesis. This reaction introduces a second double bond into the aromatic ring system. The protein is Chorismate synthase of Staphylococcus epidermidis (strain ATCC 35984 / DSM 28319 / BCRC 17069 / CCUG 31568 / BM 3577 / RP62A).